Reading from the N-terminus, the 441-residue chain is Proline--tRNA ligase (441 aa).

This sequence belongs to the class-II aminoacyl-tRNA synthetase family. ProS type 2 subfamily. As to quaternary structure, homodimer.

The protein resides in the cytoplasm. It catalyses the reaction tRNA(Pro) + L-proline + ATP = L-prolyl-tRNA(Pro) + AMP + diphosphate. Its function is as follows. Catalyzes the attachment of proline to tRNA(Pro) in a two-step reaction: proline is first activated by ATP to form Pro-AMP and then transferred to the acceptor end of tRNA(Pro). The chain is Proline--tRNA ligase from Methylorubrum populi (strain ATCC BAA-705 / NCIMB 13946 / BJ001) (Methylobacterium populi).